The chain runs to 69 residues: Cold shock-like protein CspC (69 aa).

Residues 6 to 66 (GQVKWFNESK…GQKGPAAVNV (61 aa)) enclose the CSD domain.

It localises to the cytoplasm. This chain is Cold shock-like protein CspC (cspC), found in Buchnera aphidicola subsp. Acyrthosiphon pisum (strain APS) (Acyrthosiphon pisum symbiotic bacterium).